The chain runs to 232 residues: 2,3,4,5-tetrahydropyridine-2,6-dicarboxylate N-acetyltransferase (232 aa).

The protein belongs to the transferase hexapeptide repeat family. DapH subfamily.

The catalysed reaction is (S)-2,3,4,5-tetrahydrodipicolinate + acetyl-CoA + H2O = L-2-acetamido-6-oxoheptanedioate + CoA. It functions in the pathway amino-acid biosynthesis; L-lysine biosynthesis via DAP pathway; LL-2,6-diaminopimelate from (S)-tetrahydrodipicolinate (acetylase route): step 1/3. In terms of biological role, catalyzes the transfer of an acetyl group from acetyl-CoA to tetrahydrodipicolinate. In Streptococcus suis (strain 98HAH33), this protein is 2,3,4,5-tetrahydropyridine-2,6-dicarboxylate N-acetyltransferase.